Consider the following 421-residue polypeptide: Synaptotagmin-12 (421 aa).

At Met1–Gly18 the chain is on the vesicular side. Residues Trp19–Leu39 form a helical membrane-spanning segment. Topologically, residues Trp40 to Asn421 are cytoplasmic. Residues Ser97, Ser99, and Ser214 each carry the phosphoserine modification. C2 domains are found at residues Thr152–Leu272 and Ala283–His416.

Belongs to the synaptotagmin family. Homodimer. Can also form heterodimers. Interacts with SYT1. In terms of processing, phosphorylation of Ser-97 is required for mossy-fiber long-term potentiation.

Its subcellular location is the cytoplasmic vesicle. The protein localises to the secretory vesicle. The protein resides in the synaptic vesicle membrane. In terms of biological role, synaptic vesicle phosphoprotein that enhances spontaneous neurotransmitter release but does not effect induced neurotransmitter release. Unlike other synaptotagmins, it does not bind Ca(2+) or phospholipids. Essential for mossy-fiber long-term potentiation in the hippocampus. This Homo sapiens (Human) protein is Synaptotagmin-12 (SYT12).